The primary structure comprises 567 residues: 2-isopropylmalate synthase (567 aa).

In terms of domain architecture, Pyruvate carboxyltransferase spans 28–302 (PQWCSVDLRD…NPELDFSDIN (275 aa)). Asp37, His241, His243, and Asn277 together coordinate Mg(2+). Positions 435-567 (IRTPLQLNYH…DMDTQEEDIA (133 aa)) are regulatory domain.

Belongs to the alpha-IPM synthase/homocitrate synthase family. LeuA type 2 subfamily. In terms of assembly, homodimer. Requires Mg(2+) as cofactor.

It is found in the cytoplasm. The enzyme catalyses 3-methyl-2-oxobutanoate + acetyl-CoA + H2O = (2S)-2-isopropylmalate + CoA + H(+). It functions in the pathway amino-acid biosynthesis; L-leucine biosynthesis; L-leucine from 3-methyl-2-oxobutanoate: step 1/4. Functionally, catalyzes the condensation of the acetyl group of acetyl-CoA with 3-methyl-2-oxobutanoate (2-ketoisovalerate) to form 3-carboxy-3-hydroxy-4-methylpentanoate (2-isopropylmalate). This chain is 2-isopropylmalate synthase, found in Acetoanaerobium sticklandii (strain ATCC 12662 / DSM 519 / JCM 1433 / CCUG 9281 / NCIMB 10654 / HF) (Clostridium sticklandii).